A 61-amino-acid polypeptide reads, in one-letter code: Large ribosomal subunit protein uL30 (61 aa).

This sequence belongs to the universal ribosomal protein uL30 family. Part of the 50S ribosomal subunit.

This chain is Large ribosomal subunit protein uL30, found in Thermobifida fusca (strain YX).